The primary structure comprises 164 residues: UPF0114 protein Avin_40830 (164 aa).

The next 4 membrane-spanning stretches (helical) occupy residues 15–35 (LLAP…LKFF), 53–73 (LILV…LVMV), 103–125 (GSLK…LRVF), and 136–156 (LLWY…MSYL).

The protein belongs to the UPF0114 family.

It is found in the cell membrane. In Azotobacter vinelandii (strain DJ / ATCC BAA-1303), this protein is UPF0114 protein Avin_40830.